Here is a 343-residue protein sequence, read N- to C-terminus: Putative adenosine/adenine deaminase (343 aa).

3 residues coordinate Zn(2+): His16, His18, and His204. Substrate is bound at residue His18. Glu207 functions as the Proton donor in the catalytic mechanism. Residue Asp285 coordinates Zn(2+). Substrate is bound at residue Asp286.

Belongs to the metallo-dependent hydrolases superfamily. Adenosine and AMP deaminases family. The cofactor is Zn(2+).

Putative nucleoside deaminase. May catalyze the hydrolytic deamination of adenosine or some similar substrate and play a role in purine metabolism. This chain is Putative adenosine/adenine deaminase, found in Streptomyces coelicolor (strain ATCC BAA-471 / A3(2) / M145).